A 189-amino-acid chain; its full sequence is PTS system glucose-specific EIIA component (189 aa).

Residues 31-135 enclose the PTS EIIA type-1 domain; that stretch reads DEAFAEKIVG…SVITPVVIAN (105 aa). 2 residues coordinate Zn(2+): His-68 and His-83. His-83 serves as the catalytic Tele-phosphohistidine intermediate; for EIIA activity. His-83 is modified (phosphohistidine; by HPr).

As to quaternary structure, heterodimer with glycerol kinase (glpk). Requires Zn(2+) as cofactor.

It is found in the cytoplasm. The phosphoenolpyruvate-dependent sugar phosphotransferase system (sugar PTS), a major carbohydrate active transport system, catalyzes the phosphorylation of incoming sugar substrates concomitantly with their translocation across the cell membrane. The enzyme II complex composed of PtsG and Crr is involved in glucose transport. The sequence is that of PTS system glucose-specific EIIA component (crr) from Borreliella burgdorferi (strain ATCC 35210 / DSM 4680 / CIP 102532 / B31) (Borrelia burgdorferi).